A 33-amino-acid chain; its full sequence is Large ribosomal subunit protein eL28 (33 aa).

It belongs to the eukaryotic ribosomal protein eL28 family. As to quaternary structure, component of the large ribosomal subunit.

The protein resides in the cytoplasm. Its function is as follows. Component of the large ribosomal subunit. The ribosome is a large ribonucleoprotein complex responsible for the synthesis of proteins in the cell. The chain is Large ribosomal subunit protein eL28 (rpl28) from Xenopus laevis (African clawed frog).